Reading from the N-terminus, the 590-residue chain is MALNTFLHFPPCSLSSFSCAVPKLPLAIFHKTMARQIRCPRASSQTSEPALARRSANFQPTIWTNDFIQSLNSDYSSDVYVQRIEKLKKSVRQSLEEADGPLAQLELIDDLQRLGVGRLFEREINEMLNGIYMDYKETQAQWNLHFTSMYFRLLRARGFDVSPEIFSRFMDETGNFQTSISNDPIGMLSLYEASYLCMPGETTLDEAQAFTCKHLKYWKEKDVHPTIALQIEHALELPIHWRMPRLDSRWYIKLYEEKEGTRPLLLELAKLDFNMVQSAHQTELRKVSRWWSEFGLAEKASFARDRLMEGYQWAIGTVFEPEFGQCREVLAKLAQLIAVIDDMYDVYGSPDELELFTDAVDRWNINTIEGLPDYMKLCFLSIYNTTNQGGYEFLKDHGVDIIPHLRKAWADYCKALRTEARWVNSKYTPTLDEYLNNAYTSASGPLILIHAFFFSGQEPWKEAIDCFVSSNKDIIRLSATIFRLTDDLETSAEEIERGDVPKSIQCYMHEAGASEAVSRAHIRGKISEVWRKMNKYLTAPATRHKTFNAAAFNLARTSTCVYLYGDGYGVPNGKNKENITSLTVEPIVLE.

The N-terminal 42 residues, 1-42 (MALNTFLHFPPCSLSSFSCAVPKLPLAIFHKTMARQIRCPRA), are a transit peptide targeting the chloroplast. 5 residues coordinate (2E)-geranyl diphosphate: Arg304, Asp341, Asp345, Arg483, and Asp486. Mg(2+) is bound by residues Asp341 and Asp345. The short motif at 341–345 (DDMYD) is the DDXXD motif element. Residues Asp486, Thr490, and Glu494 each contribute to the Mg(2+) site.

This sequence belongs to the terpene synthase family. Tpsb subfamily. As to quaternary structure, monomer. It depends on Mg(2+) as a cofactor.

It is found in the plastid. It localises to the chloroplast. It carries out the reaction (2E)-geranyl diphosphate = beta-thujene + diphosphate. The catalysed reaction is (2E)-geranyl diphosphate = sabinene + diphosphate. The enzyme catalyses (2E)-geranyl diphosphate = beta-pinene + diphosphate. It catalyses the reaction (2E)-geranyl diphosphate = alpha-terpinene + diphosphate. It functions in the pathway secondary metabolite biosynthesis; terpenoid biosynthesis. Monoterpene synthase involved in the biosynthesis of volatile organic compounds. Mediates the conversion of (2E)-geranyl diphosphate (GPP) into beta-thujene, sabinene, beta-pinene and alpha-terpinene. Does not use (2E,6E)-farnesyl diphosphate (FPP) as substrate. This chain is Monoterepene synthase TPS1, chloropastic, found in Cananga odorata (Ylang-ylang tree).